A 463-amino-acid chain; its full sequence is MADYDLTQKLIPHLDRHLAIPLLNHLSDIAIYPAEQLARAQYDLAKGTNMVNYVEQFHAQIENAEPTDFARLRDEATAKYQELQEKAQPVTKVIEDPDAVAKLRSGGDKDRNLDLLRSEYQIDIDQINALYHFGQYQYSLGDYGSAGNLLYHFLILSPSYELNISAQWGKLASNILNGEWDAALMQVRDLRETIDNPHGTSLAKPLAQLQARTWLLHWSLFVFFNLGENQGCQGLLDMFLSPAYLNTIQTSCPHLLRYLVAAAIISRRAPKPANVRSRDHVKELTRIVETEEYQYTDPITSFLKDVFADFDLTQAQQRLSVAESVVRSDFFLSGFADEFVENARWLISEVICRLHRRIDIGQLSKTLNLSNEEGEKWIVNLIRDSRMGVEAKIDLKENMLHITRPHATPTATLIETTRGLAFRSQAIQFAMQSSVGEPRERGERGERGNKGGRGRPRTQEVAA.

One can recognise a PCI domain in the interval 224–407 (FNLGENQGCQ…NMLHITRPHA (184 aa)). Residues 432-463 (QSSVGEPRERGERGERGNKGGRGRPRTQEVAA) form a disordered region. Basic and acidic residues predominate over residues 437–449 (EPRERGERGERGN).

It belongs to the eIF-3 subunit E family. In terms of assembly, component of the eukaryotic translation initiation factor 3 (eIF-3) complex.

Its subcellular location is the cytoplasm. In terms of biological role, component of the eukaryotic translation initiation factor 3 (eIF-3) complex, which is involved in protein synthesis of a specialized repertoire of mRNAs and, together with other initiation factors, stimulates binding of mRNA and methionyl-tRNAi to the 40S ribosome. The eIF-3 complex specifically targets and initiates translation of a subset of mRNAs involved in cell proliferation. The polypeptide is Eukaryotic translation initiation factor 3 subunit E (Cryptococcus neoformans var. neoformans serotype D (strain JEC21 / ATCC MYA-565) (Filobasidiella neoformans)).